Here is a 415-residue protein sequence, read N- to C-terminus: JmjC domain-containing protein C (415 aa).

The interval 97-140 is disordered; the sequence is NEKNNQSNNNNNNNNNNNNNNNNNNNNNNNNNNNNNNNNNNKPK. The segment covering 104–137 has biased composition (low complexity); sequence NNNNNNNNNNNNNNNNNNNNNNNNNNNNNNNNNN. One can recognise a JmjC domain in the interval 127-302; the sequence is NNNNNNNNNN…ELLKSNKLWC (176 aa).

The chain is JmjC domain-containing protein C (jcdC) from Dictyostelium discoideum (Social amoeba).